Consider the following 172-residue polypeptide: B-box zinc finger protein 18 (172 aa).

Positions 5, 8, 28, 33, 56, 59, 79, and 84 each coordinate Zn(2+). A B box-type 1; atypical zinc finger spans residues 5 to 47; that stretch reads CDACESAAAIVFCAADEAALCCSCDEKVHKCNKLASRHLRVGL. A B box-type 2; atypical zinc finger spans residues 56 to 96; it reads CDICENAPAFFYCEIDGSSLCLQCDMVVHVGGKRTHRRFLL. The tract at residues 119 to 172 is disordered; the sequence is QKASSGRGQESNGNGDHDHNMIDLNSNPQRVHEPGSHNQEEGIDVNNANNHEHE. The segment covering 120–132 has biased composition (polar residues); sequence KASSGRGQESNGN. The span at 148–158 shows a compositional bias: basic and acidic residues; the sequence is RVHEPGSHNQE.

Expressed in vasculature of leaves and petioles.

The protein localises to the nucleus. Functionally, acts as a negative regulator of seedling photomorphogenesis. Acts as a negative regulator of blue light-mediated inhibition of hypocotyl elongation through increase of bioactive gibberellin levels. Acts as a repressor of thermotolerance by modulating expression of a set of heat shock-responsive genes. This is B-box zinc finger protein 18 from Arabidopsis thaliana (Mouse-ear cress).